The sequence spans 218 residues: Large ribosomal subunit protein uL3 (218 aa).

This sequence belongs to the universal ribosomal protein uL3 family. As to quaternary structure, part of the 50S ribosomal subunit. Forms a cluster with proteins L14 and L19.

Functionally, one of the primary rRNA binding proteins, it binds directly near the 3'-end of the 23S rRNA, where it nucleates assembly of the 50S subunit. The sequence is that of Large ribosomal subunit protein uL3 from Corynebacterium diphtheriae (strain ATCC 700971 / NCTC 13129 / Biotype gravis).